The chain runs to 700 residues: Myotubularin-related protein 11 (700 aa).

Residues 1–39 are disordered; the sequence is MWWGGRGQSFNIAPQKEEPEMGLSGPKSNPGNRMPEPSS. Positions 201–644 constitute a Myotubularin phosphatase domain; that stretch reads LETLEDWETE…PQIRFWKRCY (444 aa).

This sequence belongs to the protein-tyrosine phosphatase family. Non-receptor class myotubularin subfamily.

The chain is Myotubularin-related protein 11 (Mtmr11) from Mus musculus (Mouse).